Consider the following 279-residue polypeptide: uncharacterized protein (279 aa).

This is an uncharacterized protein from Caenorhabditis elegans.